A 75-amino-acid polypeptide reads, in one-letter code: Nigwaprin-a (75 aa).

The signal sequence occupies residues 1–24 (MSSGGLLLLLGLLTLWAELTPVSG). In terms of domain architecture, WAP spans 27 to 72 (RPVKPGLCPPRPQKPPCVKECKNDWSCRGEQKCCRYGCIYECRDPI). 4 cysteine pairs are disulfide-bonded: Cys-34–Cys-60, Cys-43–Cys-64, Cys-47–Cys-59, and Cys-53–Cys-68.

The protein belongs to the venom waprin family. Expressed by the venom gland.

The protein localises to the secreted. Its function is as follows. Damages membranes of susceptible bacteria. Has no hemolytic activity. Not toxic to mice. Does not inhibit the proteinases elastase and cathepsin G. This is Nigwaprin-a from Cryptophis nigrescens (Eastern small-eyed snake).